Reading from the N-terminus, the 193-residue chain is NAD(P)H-quinone oxidoreductase subunit I (193 aa).

4Fe-4S ferredoxin-type domains lie at 55 to 84 (GRIH…VDWE) and 95 to 124 (KHYS…MTEE). Residues cysteine 64, cysteine 67, cysteine 70, cysteine 74, cysteine 104, cysteine 107, cysteine 110, and cysteine 114 each coordinate [4Fe-4S] cluster. A disordered region spans residues 169–193 (LDPHDLPSGNQRSGKRPEEIIAESD).

This sequence belongs to the complex I 23 kDa subunit family. NDH-1 is composed of at least 11 different subunits. [4Fe-4S] cluster serves as cofactor.

Its subcellular location is the cellular thylakoid membrane. It carries out the reaction a plastoquinone + NADH + (n+1) H(+)(in) = a plastoquinol + NAD(+) + n H(+)(out). The catalysed reaction is a plastoquinone + NADPH + (n+1) H(+)(in) = a plastoquinol + NADP(+) + n H(+)(out). Its function is as follows. NDH-1 shuttles electrons from an unknown electron donor, via FMN and iron-sulfur (Fe-S) centers, to quinones in the respiratory and/or the photosynthetic chain. The immediate electron acceptor for the enzyme in this species is believed to be plastoquinone. Couples the redox reaction to proton translocation, and thus conserves the redox energy in a proton gradient. This is NAD(P)H-quinone oxidoreductase subunit I from Rippkaea orientalis (strain PCC 8801 / RF-1) (Cyanothece sp. (strain PCC 8801)).